The primary structure comprises 345 residues: Probable dual-specificity RNA methyltransferase RlmN (345 aa).

The active-site Proton acceptor is the Glu-90. In terms of domain architecture, Radical SAM core spans 96-327 (QSYGNSVCVT…CIVRREFGHD (232 aa)). Cys-103 and Cys-332 form a disulfide bridge. Cys-110, Cys-114, and Cys-117 together coordinate [4Fe-4S] cluster. S-adenosyl-L-methionine-binding positions include 160–161 (GE), Ser-192, 215–217 (SLH), and Asn-291. The active-site S-methylcysteine intermediate is the Cys-332.

It belongs to the radical SAM superfamily. RlmN family. [4Fe-4S] cluster serves as cofactor.

The protein localises to the cytoplasm. It catalyses the reaction adenosine(2503) in 23S rRNA + 2 reduced [2Fe-2S]-[ferredoxin] + 2 S-adenosyl-L-methionine = 2-methyladenosine(2503) in 23S rRNA + 5'-deoxyadenosine + L-methionine + 2 oxidized [2Fe-2S]-[ferredoxin] + S-adenosyl-L-homocysteine. It carries out the reaction adenosine(37) in tRNA + 2 reduced [2Fe-2S]-[ferredoxin] + 2 S-adenosyl-L-methionine = 2-methyladenosine(37) in tRNA + 5'-deoxyadenosine + L-methionine + 2 oxidized [2Fe-2S]-[ferredoxin] + S-adenosyl-L-homocysteine. Functionally, specifically methylates position 2 of adenine 2503 in 23S rRNA and position 2 of adenine 37 in tRNAs. This Spiroplasma citri protein is Probable dual-specificity RNA methyltransferase RlmN.